The following is a 296-amino-acid chain: Adrenocorticotropic hormone receptor (296 aa).

Residues 1-23 (MKHIINSYEHTNDTARNNSDCPD) are Extracellular-facing. Residues Asn12 and Asn17 are each glycosylated (N-linked (GlcNAc...) asparagine). Cystine bridges form between Cys21–Cys253 and Cys245–Cys251. Residues 24–49 (VVLPEEIFFTISVIGILENLIVLLAV) form a helical membrane-spanning segment. Topologically, residues 50-58 (IKNKNLQSP) are cytoplasmic. The helical transmembrane segment at 59–79 (MYFFICSLAISDMLGSLYKIL) threads the bilayer. At 80–104 (ENILIMFRNMGYLKPRGSFESTADD) the chain is on the extracellular side. The chain crosses the membrane as a helical span at residues 105 to 126 (IIDCMFILSLLGSIFSLSVIAA). Residues 127 to 147 (DRYITIFHALQYHSIVTMRRT) are Cytoplasmic-facing. The chain crosses the membrane as a helical span at residues 148-168 (IITLTIIWMFCTGSGITMVIF). The Extracellular segment spans residues 169–180 (SHHIPTVLTFTS). A helical transmembrane segment spans residues 181–199 (LFPLMLVFILCLYIHMFLL). Over 200–217 (ARSHARKISTLPRTNMKG) the chain is Cytoplasmic. Residues 218–244 (AMTLTILLGVFIFCWAPFVLHVLLMTF) form a helical membrane-spanning segment. Residues 245–256 (CPNNPYCVCYMS) are Extracellular-facing. The helical transmembrane segment at 257–278 (LFQVNGMLIMCNAVIDPFIYAF) threads the bilayer. Residues 279 to 296 (RSPELRDAFKRMLFCNRY) are Cytoplasmic-facing. Cys293 carries the S-palmitoyl cysteine lipid modification.

Belongs to the G-protein coupled receptor 1 family. Homodimer. Interacts with corticotropin (ACTH). Interacts with MRAP; this interaction targets MC2R to the plasma membrane. Interacts with MRAP2; competing with MRAP for binding to MC2R and impairing the binding of corticotropin (ACTH). Ubiquitinated by MGRN1 that may be involved in post-endocytic trafficking and/or degradation of internalized receptor.

It is found in the cell membrane. Its function is as follows. Hormone receptor primarily expressed in adrenal cortex that plays a key role in regulating adrenocortical function. Upon corticotropin (ACTH) binding, facilitates the release of adrenal glucocorticoids, including cortisol and corticosterone. In addition, MC2R is required for fetal and neonatal adrenal gland development. Mechanistically, activates adenylate cyclase (cAMP), the MAPK cascade as well as the cAMP-dependent protein kinase A pathway leading to steroidogenic factor 1/NR5A1-mediated transcriptional activation. The sequence is that of Adrenocorticotropic hormone receptor (Mc2r) from Mus musculus (Mouse).